Reading from the N-terminus, the 637-residue chain is tRNA 5-methylaminomethyl-2-thiouridine biosynthesis bifunctional protein MnmC (637 aa).

The segment at 1 to 20 is disordered; that stretch reads MSERIEWLEDGTAGGSPYSP. Residues 1–232 form a tRNA (mnm(5)s(2)U34)-methyltransferase region; sequence MSERIEWLED…KRDNLQGEYQ (232 aa). The interval 255–637 is FAD-dependent cmnm(5)s(2)U34 oxidoreductase; sequence IGAGLAGSAV…YATRLQPSGS (383 aa).

The protein in the N-terminal section; belongs to the methyltransferase superfamily. tRNA (mnm(5)s(2)U34)-methyltransferase family. In the C-terminal section; belongs to the DAO family. The cofactor is FAD.

The protein resides in the cytoplasm. It catalyses the reaction 5-aminomethyl-2-thiouridine(34) in tRNA + S-adenosyl-L-methionine = 5-methylaminomethyl-2-thiouridine(34) in tRNA + S-adenosyl-L-homocysteine + H(+). In terms of biological role, catalyzes the last two steps in the biosynthesis of 5-methylaminomethyl-2-thiouridine (mnm(5)s(2)U) at the wobble position (U34) in tRNA. Catalyzes the FAD-dependent demodification of cmnm(5)s(2)U34 to nm(5)s(2)U34, followed by the transfer of a methyl group from S-adenosyl-L-methionine to nm(5)s(2)U34, to form mnm(5)s(2)U34. This is tRNA 5-methylaminomethyl-2-thiouridine biosynthesis bifunctional protein MnmC from Polaromonas naphthalenivorans (strain CJ2).